We begin with the raw amino-acid sequence, 40 residues long: uncharacterized protein (40 aa).

Polar residues predominate over residues 1–14 (MNRMLSLSVQSQRA). Positions 1-25 (MNRMLSLSVQSQRAPASPSPYGLKI) are disordered.

This is an uncharacterized protein from Treponema pallidum (strain Nichols).